The primary structure comprises 123 residues: Small ribosomal subunit protein uS13 (123 aa).

A disordered region spans residues 95–123; sequence GLPVRGQKTKTNARTRKGPKRTVGRKKKK. Residues 101 to 123 are compositionally biased toward basic residues; the sequence is QKTKTNARTRKGPKRTVGRKKKK.

This sequence belongs to the universal ribosomal protein uS13 family. As to quaternary structure, part of the 30S ribosomal subunit. Forms a loose heterodimer with protein S19. Forms two bridges to the 50S subunit in the 70S ribosome.

Functionally, located at the top of the head of the 30S subunit, it contacts several helices of the 16S rRNA. In the 70S ribosome it contacts the 23S rRNA (bridge B1a) and protein L5 of the 50S subunit (bridge B1b), connecting the 2 subunits; these bridges are implicated in subunit movement. Contacts the tRNAs in the A and P-sites. In Alkaliphilus metalliredigens (strain QYMF), this protein is Small ribosomal subunit protein uS13.